Reading from the N-terminus, the 578-residue chain is CTP synthase (578 aa).

The 255-residue stretch at 305–559 folds into the Glutamine amidotransferase type-1 domain; that stretch reads KIALVGKYTN…LGLVAASSGI (255 aa). Residues C404, H535, and E537 each act as for GATase activity in the active site.

It belongs to the CTP synthase family.

It catalyses the reaction UTP + L-glutamine + ATP + H2O = CTP + L-glutamate + ADP + phosphate + 2 H(+). The protein operates within pyrimidine metabolism; CTP biosynthesis via de novo pathway; CTP from UDP: step 2/2. Its function is as follows. Catalyzes the ATP-dependent amination of UTP to CTP with either L-glutamine or ammonia as the source of nitrogen. The polypeptide is CTP synthase (URA7) (Candida glabrata (strain ATCC 2001 / BCRC 20586 / JCM 3761 / NBRC 0622 / NRRL Y-65 / CBS 138) (Yeast)).